Reading from the N-terminus, the 175-residue chain is Large ribosomal subunit protein uL10 (175 aa).

Belongs to the universal ribosomal protein uL10 family. As to quaternary structure, part of the ribosomal stalk of the 50S ribosomal subunit. The N-terminus interacts with L11 and the large rRNA to form the base of the stalk. The C-terminus forms an elongated spine to which L12 dimers bind in a sequential fashion forming a multimeric L10(L12)X complex.

Forms part of the ribosomal stalk, playing a central role in the interaction of the ribosome with GTP-bound translation factors. This is Large ribosomal subunit protein uL10 from Xylella fastidiosa (strain M23).